Reading from the N-terminus, the 485-residue chain is Glutamyl-tRNA(Gln) amidotransferase subunit A (485 aa).

Active-site charge relay system residues include K79 and S154. S178 (acyl-ester intermediate) is an active-site residue.

This sequence belongs to the amidase family. GatA subfamily. In terms of assembly, heterotrimer of A, B and C subunits.

The enzyme catalyses L-glutamyl-tRNA(Gln) + L-glutamine + ATP + H2O = L-glutaminyl-tRNA(Gln) + L-glutamate + ADP + phosphate + H(+). Allows the formation of correctly charged Gln-tRNA(Gln) through the transamidation of misacylated Glu-tRNA(Gln) in organisms which lack glutaminyl-tRNA synthetase. The reaction takes place in the presence of glutamine and ATP through an activated gamma-phospho-Glu-tRNA(Gln). This chain is Glutamyl-tRNA(Gln) amidotransferase subunit A, found in Persephonella marina (strain DSM 14350 / EX-H1).